A 439-amino-acid polypeptide reads, in one-letter code: UDP-N-acetylmuramate--L-alanine ligase (439 aa).

113-119 contributes to the ATP binding site; that stretch reads GSHGKTS.

The protein belongs to the MurCDEF family.

The protein resides in the cytoplasm. The enzyme catalyses UDP-N-acetyl-alpha-D-muramate + L-alanine + ATP = UDP-N-acetyl-alpha-D-muramoyl-L-alanine + ADP + phosphate + H(+). Its pathway is cell wall biogenesis; peptidoglycan biosynthesis. Functionally, cell wall formation. This Lactobacillus delbrueckii subsp. bulgaricus (strain ATCC 11842 / DSM 20081 / BCRC 10696 / JCM 1002 / NBRC 13953 / NCIMB 11778 / NCTC 12712 / WDCM 00102 / Lb 14) protein is UDP-N-acetylmuramate--L-alanine ligase.